A 100-amino-acid chain; its full sequence is Integration host factor subunit alpha (100 aa).

The disordered stretch occupies residues 53 to 72; it reads FDLRDKRQRPGRNPKTGEEI.

This sequence belongs to the bacterial histone-like protein family. As to quaternary structure, heterodimer of an alpha and a beta chain.

This protein is one of the two subunits of integration host factor, a specific DNA-binding protein that functions in genetic recombination as well as in transcriptional and translational control. The sequence is that of Integration host factor subunit alpha from Stutzerimonas stutzeri (strain A1501) (Pseudomonas stutzeri).